Consider the following 442-residue polypeptide: Protein bag of marbles (442 aa).

The interval 201 to 250 (FDMPVKSTMPKSLNVRYQLQVLCTKVERFLVQQRRTLEANRHFDFEKYDE) is required for interaction with ubiquitin. A disordered region spans residues 408-442 (VSMEQPSASEEEFEETEEVPSSPPRHTGRVPRFRS). The segment covering 416–425 (SEEEFEETEE) has biased composition (acidic residues). The span at 433-442 (HTGRVPRFRS) shows a compositional bias: basic residues.

In terms of assembly, interacts (via central region) with ubiquitin. Interacts (via C-terminus) with otu (via OTU domain); the interaction enhances otu aggregation into amyloid-like structures and enhances its deubiquitinase activity. Together with otu interacts with CycA/cyclin-A (via C-terminus); the interaction stabilizes CycA by promoting and enhancing otu dependent deubiquitination of CycA. Together with otu interacts with Traf6. Part of a complex composed of at least tut, bam and bgcn; complex formation does not require RNA. Interacts (via C-terminus) with bgcn; the interaction is direct and is not disrupted by eIF4A. Interacts with eIF4A (via multiple contacts); the interaction is direct and is not disrupted by bgcn. Interacts (via N-terminus) with tut; the interaction is direct and mediates the interaction between tut and bgcn. As part of the bam-bgcn-tut complex associates with twin; may recruit the CCR4-NOT1 deadenylation complex to mRNA 3'-UTRs to mediate post-transcriptional regulation of expression. Part of a complex composed of at least mei-P26, bam, bgcn and Sxl; this complex is involved in translational repression of nanos mRNA. Post-translationally, ubiquitinated (C-terminal region). In cystoblasts and/or very early cystocytes in testis (at protein level); expression levels are regulated by mei-P26. In cystoblasts and/or very early cystocytes in ovary. Expressed in the gut; expression levels increase with age.

Its subcellular location is the cytoplasm. Functionally, regulatory component of a deubiquitinase complex consisting of bam and otu. The complex deubiquitinates K63-linked polyubiquitinated proteins, antagonizing the ubiquitination activity of Traf6 and regulating the IMD immune signaling pathway. Otu-bam deubiquitinase activity is regulated by Traf6 dependent immune signaling regulation of bam expression levels; this forms a feedback loop that regulates the IMD immune signaling pathway and balances gut immune activity during aging. The complex deubiquitinates and stabilizes CycA/cyclin-A to regulate CycA-dependent differentiation. Required to initiate both male and female gametogenesis. Part of a complex with bgcn involved in 3'-UTR-dependent translational repression of a subset of mRNAs, including those for mei-P26, nanos and shg/E-cadherin. Repression of mei-P26 is targeted by let-7 miRNA. Involved in a regulatory cascade with mei-P26 to control the progression of cystocytes through transit amplification and the switch to spermatocyte differentiation; mei-P26 facilitates bam accumulation, which in turn represses translation of mei-P26. Forms a complex with tut and bgcn involved in 3'-UTR-dependent post-transcriptional repression of several 3'-RNA processing factors, which promotes germline stem cell lineage differentiation and mitosis-to-meiosis transition. The polypeptide is Protein bag of marbles (Drosophila melanogaster (Fruit fly)).